The chain runs to 581 residues: MLSILMQGLRLKKCFLPILVMFFLAGCVNLLGSSFTASLKNDANASSDFYIRKIEQTQNQQDLQTYKLLAARVLVTENKIPQAEAYLAELIDLNDEQKLDKSLIEAHISAIKGKNETAEYQLSLIHLTLLSPSQKSRYYEIVSRIAENRHDNISAIKARIQMDNFLSDIQRKQQNNDRTWALLRNTDSEVLNNTDAEGNITLSGWLTLAQLYNDNLNQPAQLIQTLLTWKNYYPTHTAAHLLPTELQGLANFQQTTLTQVGLILPLSGNTRLIGETIKNGFDDAKVNYNVQVHVFDSMKMSIEQIINQAKKQGINTLVGPLLKQNVDVIVNNPYLVQDLNVLALNSTPNARAIEHLCYYGLSPEDEAESAASKMWNDTVRIPLVLVPQNNLGRRTAAAFTLRWQQLLGTDANIKFYNQTADINFALKSGLSESTDGVYIIANNKQLAEIKAVLDNINPTLKLYASSRSNSPNSGPEHRLFLNNLQFSDIPFFKDRESEQYKKIEKMTNNDYSLMHLYAMGYDAWLLINQFNEFRQIPGFTIDGLTGKLSAGPNCNVERDMTWFQYQNGSIYPLNEQDDSII.

An N-terminal signal peptide occupies residues 1 to 26 (MLSILMQGLRLKKCFLPILVMFFLAG). Cys-27 carries N-palmitoyl cysteine lipidation. A lipid anchor (S-diacylglycerol cysteine) is attached at Cys-27.

The protein belongs to the LpoA family. As to quaternary structure, interacts with PBP1a.

It is found in the cell outer membrane. Its function is as follows. Regulator of peptidoglycan synthesis that is essential for the function of penicillin-binding protein 1A (PBP1a). This is Penicillin-binding protein activator LpoA from Histophilus somni (strain 129Pt) (Haemophilus somnus).